Consider the following 328-residue polypeptide: GTP cyclohydrolase MptA (328 aa).

Belongs to the GTP cyclohydrolase IV family. As to quaternary structure, homodimer. Requires Fe(2+) as cofactor.

The catalysed reaction is GTP + H2O = 7,8-dihydroneopterin 2',3'-cyclic phosphate + formate + diphosphate + H(+). It participates in cofactor biosynthesis; 5,6,7,8-tetrahydromethanopterin biosynthesis. Converts GTP to 7,8-dihydro-D-neopterin 2',3'-cyclic phosphate, the first intermediate in the biosynthesis of coenzyme methanopterin. In Methanospirillum hungatei JF-1 (strain ATCC 27890 / DSM 864 / NBRC 100397 / JF-1), this protein is GTP cyclohydrolase MptA.